The following is a 300-amino-acid chain: Erythroblast NAD(P)(+)--arginine ADP-ribosyltransferase (300 aa).

The first 22 residues, 1-22, serve as a signal peptide directing secretion; sequence MEEPLLHAILGLVLLLSTRTDA. Disulfide bonds link Cys-51–Cys-260 and Cys-159–Cys-208. Residues 70 to 256 form the TR mART core domain; sequence ETFAEGWRSA…IQLRSQGKSS (187 aa). The NAD(+) site is built by Tyr-107, Arg-164, and Gln-183. Residue Arg-164 is part of the active site. Ser-186 is a catalytic residue. Ser-217 is an NAD(+) binding site. The active site involves Glu-224. Positions 276–300 are disordered; it reads SADKSSPLPRSPWPGWAPLAAPHSH.

This sequence belongs to the Arg-specific ADP-ribosyltransferase family.

The enzyme catalyses L-arginyl-[protein] + NAD(+) = N(omega)-(ADP-D-ribosyl)-L-arginyl-[protein] + nicotinamide + H(+). This is Erythroblast NAD(P)(+)--arginine ADP-ribosyltransferase (MADPRT) from Gallus gallus (Chicken).